The following is a 130-amino-acid chain: Protein 7.7 (130 aa).

The chain is Protein 7.7 from Escherichia phage T7 (Bacteriophage T7).